Reading from the N-terminus, the 897-residue chain is Beta-galactosidase (897 aa).

The active-site Proton donor is Glu459. The active-site Nucleophile is Glu525.

This sequence belongs to the glycosyl hydrolase 2 family.

The catalysed reaction is Hydrolysis of terminal non-reducing beta-D-galactose residues in beta-D-galactosides.. In Clostridium acetobutylicum, this protein is Beta-galactosidase (cbgA).